The following is a 457-amino-acid chain: Mannose-6-phosphate isomerase (457 aa).

Residues Gln-108, His-110, Glu-135, and His-292 each coordinate Zn(2+). Residue Arg-311 is part of the active site.

This sequence belongs to the mannose-6-phosphate isomerase type 1 family. The cofactor is Zn(2+).

It localises to the cytoplasm. It carries out the reaction D-mannose 6-phosphate = D-fructose 6-phosphate. It functions in the pathway nucleotide-sugar biosynthesis; GDP-alpha-D-mannose biosynthesis; alpha-D-mannose 1-phosphate from D-fructose 6-phosphate: step 1/2. Functionally, involved in the synthesis of the GDP-mannose and dolichol-phosphate-mannose required for a number of critical mannosyl transfer reactions. The protein is Mannose-6-phosphate isomerase (pmi1) of Aspergillus fumigatus (strain ATCC MYA-4609 / CBS 101355 / FGSC A1100 / Af293) (Neosartorya fumigata).